We begin with the raw amino-acid sequence, 154 residues long: Troponin C, isoallergen Bla g 6.0301 (154 aa).

4 EF-hand domains span residues 11 to 46 (EQIS…MGQP), 47 to 82 (FNRR…FIIE), 87 to 122 (AMEK…LDEQ), and 123 to 154 (LTSD…MMTG). Residues aspartate 60, aspartate 62, serine 64, arginine 66, and glutamate 71 each contribute to the Ca(2+) site. Positions 136, 138, 140, 142, and 147 each coordinate Ca(2+).

This sequence belongs to the troponin C family.

Functionally, troponin is the central regulatory protein of striated muscle contraction. It consists of three components: Troponin-I (Tn-I) which is the inhibitor of actomyosin ATPase, Troponin-T (Tn-T) which contains the binding site for tropomyosin and Troponin-C (Tn-C). The binding of calcium to Tn-C abolishes the inhibitory action of Tn on actin filaments. In Blattella germanica (German cockroach), this protein is Troponin C, isoallergen Bla g 6.0301.